We begin with the raw amino-acid sequence, 329 residues long: Endonuclease 8-like 2 (329 aa).

The Schiff-base intermediate with DNA role is filled by Pro2. Residue Glu3 is the Proton donor of the active site. Residue Lys50 is the Proton donor; for beta-elimination activity of the active site. Lys50 is modified (N6-acetyllysine). Ser68 carries the post-translational modification Phosphoserine. A disordered region spans residues 88-112 (GPSAQEPSAGPSGSGEPVPSRSAET). Lys150 is modified (N6-acetyllysine). Residue Asn227 participates in DNA binding. The FPG-type zinc finger occupies 280–316 (QIYQKEQCPSGHQVMKETFGPPDGLQRLTWWCPQCQP). Residue Arg306 is the Proton donor; for delta-elimination activity of the active site.

This sequence belongs to the FPG family. In terms of assembly, binds EP300.

Its subcellular location is the nucleus. It carries out the reaction 2'-deoxyribonucleotide-(2'-deoxyribose 5'-phosphate)-2'-deoxyribonucleotide-DNA = a 3'-end 2'-deoxyribonucleotide-(2,3-dehydro-2,3-deoxyribose 5'-phosphate)-DNA + a 5'-end 5'-phospho-2'-deoxyribonucleoside-DNA + H(+). Its activity is regulated as follows. Acetylation of Lys-50 leads to loss of DNA nicking activity. In terms of biological role, involved in base excision repair of DNA damaged by oxidation or by mutagenic agents. Has DNA glycosylase activity towards 5-hydroxyuracil and other oxidized derivatives of cytosine with a preference for mismatched double-stranded DNA (DNA bubbles). Has low or no DNA glycosylase activity towards thymine glycol, 2-hydroxyadenine, hypoxanthine and 8-oxoguanine. Has AP (apurinic/apyrimidinic) lyase activity and introduces nicks in the DNA strand. Cleaves the DNA backbone by beta-delta elimination to generate a single-strand break at the site of the removed base with both 3'- and 5'-phosphates. This Mus musculus (Mouse) protein is Endonuclease 8-like 2 (Neil2).